The following is a 129-amino-acid chain: Sulfurtransferase TusD (129 aa).

Cys79 functions as the Cysteine persulfide intermediate in the catalytic mechanism.

The protein belongs to the DsrE/TusD family. As to quaternary structure, heterohexamer, formed by a dimer of trimers. The hexameric TusBCD complex contains 2 copies each of TusB, TusC and TusD. The TusBCD complex interacts with TusE.

It is found in the cytoplasm. In terms of biological role, part of a sulfur-relay system required for 2-thiolation of 5-methylaminomethyl-2-thiouridine (mnm(5)s(2)U) at tRNA wobble positions. Accepts sulfur from TusA and transfers it in turn to TusE. This is Sulfurtransferase TusD from Pectobacterium atrosepticum (strain SCRI 1043 / ATCC BAA-672) (Erwinia carotovora subsp. atroseptica).